A 226-amino-acid chain; its full sequence is uncharacterized protein (226 aa).

4 helical membrane passes run 25–45 (ALAW…IFLI), 54–74 (FLLF…YFIF), 107–127 (ELFL…YFFI), and 153–173 (TITI…CFSS).

The protein resides in the cell membrane. This is an uncharacterized protein from Mycoplasma genitalium (strain ATCC 33530 / DSM 19775 / NCTC 10195 / G37) (Mycoplasmoides genitalium).